A 198-amino-acid polypeptide reads, in one-letter code: Probable chemoreceptor glutamine deamidase CheD (198 aa).

The protein belongs to the CheD family.

The catalysed reaction is L-glutaminyl-[protein] + H2O = L-glutamyl-[protein] + NH4(+). Its function is as follows. Probably deamidates glutamine residues to glutamate on methyl-accepting chemotaxis receptors (MCPs), playing an important role in chemotaxis. The chain is Probable chemoreceptor glutamine deamidase CheD from Stenotrophomonas maltophilia (strain K279a).